Reading from the N-terminus, the 240-residue chain is Orotidine 5'-phosphate decarboxylase (240 aa).

Substrate-binding positions include D15, K37, 64 to 73, T127, R188, Q197, G217, and R218; that span reads DLKYHDIPNT. K66 serves as the catalytic Proton donor.

It belongs to the OMP decarboxylase family. Type 1 subfamily. In terms of assembly, homodimer.

The enzyme catalyses orotidine 5'-phosphate + H(+) = UMP + CO2. Its pathway is pyrimidine metabolism; UMP biosynthesis via de novo pathway; UMP from orotate: step 2/2. Functionally, catalyzes the decarboxylation of orotidine 5'-monophosphate (OMP) to uridine 5'-monophosphate (UMP). This Citrifermentans bemidjiense (strain ATCC BAA-1014 / DSM 16622 / JCM 12645 / Bem) (Geobacter bemidjiensis) protein is Orotidine 5'-phosphate decarboxylase.